A 616-amino-acid chain; its full sequence is Probable Xaa-Pro aminopeptidase P (616 aa).

Residues D413, D424, E522, and E536 each contribute to the Mn(2+) site.

It belongs to the peptidase M24B family. Requires Mn(2+) as cofactor.

It catalyses the reaction Release of any N-terminal amino acid, including proline, that is linked to proline, even from a dipeptide or tripeptide.. Its function is as follows. Catalyzes the removal of a penultimate prolyl residue from the N-termini of peptides. The sequence is that of Probable Xaa-Pro aminopeptidase P (AMPP) from Paracoccidioides lutzii (strain ATCC MYA-826 / Pb01) (Paracoccidioides brasiliensis).